A 447-amino-acid polypeptide reads, in one-letter code: MKRSLHSKEVANLSDVIKIDKLPEKAIIPMRQHDGIACAPLVKKGAEVIVGQKLGECEGSDLAYVHSPFCGTVNSIELMPNPSGKRILSVVLTPSECAQTVDFVPEKDAPPSRLIEIIKEAGIVEYYEKPTYLALKPGKRIDTLLMNATFPLITHAYLSSLDKVLEGFKLMLEASGISRGVIVLRADDKESIKAFKNAKVDGKPLTVAPIVGMRHADYYLEDVEDQIIVVAAGKITYTPTMMNLLSANVMGRKLPLGYEPPDVHVVVCGVKSAKAVYDAINEGKPYLESAVTVTGAVNNPKTVIVKFGTPIKDVIEACGGYKGEPGKVIVNGSMGGVAVYTDEAPVVKNTVGIVVQTEAEVLRDEATVCIHCARCVDVCPMNLLPGRIAAMADMGMFDRCREYFALNCIECGECAVVCPAKRHLVQLIRYSKLQIMNQKNETVEATE.

4Fe-4S ferredoxin-type domains follow at residues 359–389 and 399–430; these read AEVL…GRIA and RCRE…LIRY. Residues Cys-369, Cys-372, Cys-375, Cys-379, Cys-408, Cys-411, Cys-414, and Cys-418 each coordinate [4Fe-4S] cluster.

Belongs to the 4Fe4S bacterial-type ferredoxin family. RnfC subfamily. As to quaternary structure, the Rnf complex is probably composed of eight subunits, including RnfA, RnfB, RnfC, RnfD, RnfE and RnfG. The cofactor is [4Fe-4S] cluster.

The protein localises to the cell membrane. Functionally, part of a membrane-bound complex that couples electron transfer with translocation of ions across the membrane. Catalyzes Na(+) transport, most probably coupled to electron transfer from reduced ferredoxin to methanophenazine and heterodisulfide reductase. Involved in heterodisulfide reduction during methanogenesis from acetate. The protein is Ion-translocating oxidoreductase complex subunit C of Methanosarcina acetivorans (strain ATCC 35395 / DSM 2834 / JCM 12185 / C2A).